Here is a 276-residue protein sequence, read N- to C-terminus: Formamidopyrimidine-DNA glycosylase (276 aa).

Catalysis depends on Pro-2, which acts as the Schiff-base intermediate with DNA. The active-site Proton donor is the Glu-3. The active-site Proton donor; for beta-elimination activity is the Lys-60. Residues His-93 and Arg-112 each contribute to the DNA site. An FPG-type zinc finger spans residues Asn-240 to Pro-274. Residue Arg-264 is the Proton donor; for delta-elimination activity of the active site.

The protein belongs to the FPG family. As to quaternary structure, monomer. Requires Zn(2+) as cofactor.

The catalysed reaction is Hydrolysis of DNA containing ring-opened 7-methylguanine residues, releasing 2,6-diamino-4-hydroxy-5-(N-methyl)formamidopyrimidine.. It carries out the reaction 2'-deoxyribonucleotide-(2'-deoxyribose 5'-phosphate)-2'-deoxyribonucleotide-DNA = a 3'-end 2'-deoxyribonucleotide-(2,3-dehydro-2,3-deoxyribose 5'-phosphate)-DNA + a 5'-end 5'-phospho-2'-deoxyribonucleoside-DNA + H(+). Its function is as follows. Involved in base excision repair of DNA damaged by oxidation or by mutagenic agents. Acts as a DNA glycosylase that recognizes and removes damaged bases. Has a preference for oxidized purines, such as 7,8-dihydro-8-oxoguanine (8-oxoG). Has AP (apurinic/apyrimidinic) lyase activity and introduces nicks in the DNA strand. Cleaves the DNA backbone by beta-delta elimination to generate a single-strand break at the site of the removed base with both 3'- and 5'-phosphates. The protein is Formamidopyrimidine-DNA glycosylase of Bacillus cereus (strain ATCC 14579 / DSM 31 / CCUG 7414 / JCM 2152 / NBRC 15305 / NCIMB 9373 / NCTC 2599 / NRRL B-3711).